Reading from the N-terminus, the 747-residue chain is Polyribonucleotide nucleotidyltransferase (747 aa).

Mg(2+)-binding residues include D502 and D508. The KH domain maps to 569-628 (PRMLTITIDPDKIRDIIGPGGKIIKKIIEETGVEIDVEDDGRVFIASTDAAAGERALKII). In terms of domain architecture, S1 motif spans 638–712 (GKVYNGKVTR…PQGRLKLSRK (75 aa)). The disordered stretch occupies residues 718-747 (STVGEGGHRHFRRAGREGGHRGLNNRRQSR).

It belongs to the polyribonucleotide nucleotidyltransferase family. The cofactor is Mg(2+).

Its subcellular location is the cytoplasm. It catalyses the reaction RNA(n+1) + phosphate = RNA(n) + a ribonucleoside 5'-diphosphate. In terms of biological role, involved in mRNA degradation. Catalyzes the phosphorolysis of single-stranded polyribonucleotides processively in the 3'- to 5'-direction. This Moorella thermoacetica (strain ATCC 39073 / JCM 9320) protein is Polyribonucleotide nucleotidyltransferase.